Consider the following 160-residue polypeptide: Nucleotide-binding protein Tgr7_1196 (160 aa).

This sequence belongs to the YajQ family.

Its function is as follows. Nucleotide-binding protein. This is Nucleotide-binding protein Tgr7_1196 from Thioalkalivibrio sulfidiphilus (strain HL-EbGR7).